We begin with the raw amino-acid sequence, 241 residues long: Triosephosphate isomerase (241 aa).

Residue 9–11 (NWK) coordinates substrate. His-96 serves as the catalytic Electrophile. The active-site Proton acceptor is the Glu-165. Residues Gly-171, Ser-204, and 225–226 (GG) each bind substrate.

It belongs to the triosephosphate isomerase family. Homodimer.

It is found in the cytoplasm. It catalyses the reaction D-glyceraldehyde 3-phosphate = dihydroxyacetone phosphate. The protein operates within carbohydrate biosynthesis; gluconeogenesis. Its pathway is carbohydrate degradation; glycolysis; D-glyceraldehyde 3-phosphate from glycerone phosphate: step 1/1. Involved in the gluconeogenesis. Catalyzes stereospecifically the conversion of dihydroxyacetone phosphate (DHAP) to D-glyceraldehyde-3-phosphate (G3P). The polypeptide is Triosephosphate isomerase (Trichodesmium erythraeum (strain IMS101)).